A 396-amino-acid polypeptide reads, in one-letter code: Probable sugar efflux transporter (396 aa).

Helical transmembrane passes span 15-35, 51-71, 84-104, 109-129, 137-157, 168-188, 209-229, 245-265, 276-296, 297-317, 333-353, and 365-385; these read VLIMACAGFIFNTTEFVPVAM, GLMMTVYAWTVLIMSLPAMLA, LFIIFIVGHILSVIAWNFWIL, MCIALAHSVFWSITASLVMRI, QALGMLAIGTALATILGLPIG, VTFGIIAVLALSIMFLIIRLL, PLLLWLYVTTAIVISAHFTAY, NFATAVLLVFGFSGIAASLLF, FIVVSMSLLMFSLLLLLFSTE, TIIAMFSLVFIWGIGISCIGL, VATAIYSGIFNAGIGAGALFG, and IGYTGAALGLIGFIIFITTHL.

This sequence belongs to the major facilitator superfamily. SotB (TC 2.A.1.2) family.

Its subcellular location is the cell inner membrane. Functionally, involved in the efflux of sugars. The physiological role may be the reduction of the intracellular concentration of toxic sugars or sugar metabolites. This Haemophilus influenzae (strain PittGG) protein is Probable sugar efflux transporter.